The following is a 93-amino-acid chain: Co-chaperonin GroES (93 aa).

The protein belongs to the GroES chaperonin family. In terms of assembly, heptamer of 7 subunits arranged in a ring. Interacts with the chaperonin GroEL.

Its subcellular location is the cytoplasm. Functionally, together with the chaperonin GroEL, plays an essential role in assisting protein folding. The GroEL-GroES system forms a nano-cage that allows encapsulation of the non-native substrate proteins and provides a physical environment optimized to promote and accelerate protein folding. GroES binds to the apical surface of the GroEL ring, thereby capping the opening of the GroEL channel. In Streptococcus intermedius, this protein is Co-chaperonin GroES.